The following is a 202-amino-acid chain: Imidazole glycerol phosphate synthase subunit HisH (202 aa).

The region spanning 3 to 202 is the Glutamine amidotransferase type-1 domain; the sequence is RIVIIDYGLG…KILKNFVEMC (200 aa). The active-site Nucleophile is cysteine 79. Active-site residues include histidine 183 and glutamate 185.

Heterodimer of HisH and HisF.

Its subcellular location is the cytoplasm. The catalysed reaction is 5-[(5-phospho-1-deoxy-D-ribulos-1-ylimino)methylamino]-1-(5-phospho-beta-D-ribosyl)imidazole-4-carboxamide + L-glutamine = D-erythro-1-(imidazol-4-yl)glycerol 3-phosphate + 5-amino-1-(5-phospho-beta-D-ribosyl)imidazole-4-carboxamide + L-glutamate + H(+). It catalyses the reaction L-glutamine + H2O = L-glutamate + NH4(+). The protein operates within amino-acid biosynthesis; L-histidine biosynthesis; L-histidine from 5-phospho-alpha-D-ribose 1-diphosphate: step 5/9. Its function is as follows. IGPS catalyzes the conversion of PRFAR and glutamine to IGP, AICAR and glutamate. The HisH subunit catalyzes the hydrolysis of glutamine to glutamate and ammonia as part of the synthesis of IGP and AICAR. The resulting ammonia molecule is channeled to the active site of HisF. This is Imidazole glycerol phosphate synthase subunit HisH from Methanosarcina acetivorans (strain ATCC 35395 / DSM 2834 / JCM 12185 / C2A).